The following is a 138-amino-acid chain: Dehydratase iacD (138 aa).

Residues 18–113 form the EthD domain; that stretch reads GVSEEDFIEW…LKDQDVWMDN (96 aa).

Belongs to the tpcK family.

It participates in secondary metabolite biosynthesis. In terms of biological role, dehydratase; part of the gene cluster that mediates the biosynthesis of iso-A82775C, a enylepoxycyclohexane and biosynthetic precursor of the chloropestolide anticancer natural products. Within the cluster, the prenyltransferase iacE prenylates siccayne to generate pestalodiol E, using dimethylallyl diphosphate (DMAPP) as cosubstrate. The probable oxidoreductase iacF is then involved in the epoxidation of pestalodiol F to pestalodiol F, which is further converted to pestalofone A by the short-chain dehydrogenase/reductase iacG. Iso-A82775C is subsequently generated from pestalofone A by the short-chain dehydrogenase/reductase iacC. Iso-A82775C is further condensed with maldoxin via a Diels-Alder reaction to produce the anticancer natural products chloropestolides A to E. This chain is Dehydratase iacD, found in Pestalotiopsis fici (strain W106-1 / CGMCC3.15140).